Consider the following 241-residue polypeptide: MEEDWEQHGEKEEVPLPAKKPDANKWDGEDEEEEVKDSWEDEDELEEKKDEEKVETPKAKPKKTLQQKIVEKEKQKHEEAERRRLEKEAENMTPEQKLAEKLRLQKLQEESDLKNALDTFGVTTLAGGIDGMTPNTKEDFVELSDAIVKKLASYKSDPEYADFLEDLVTKLFAGLPSNNIRKVKGILDNLYLEKQKLEKGDKPKKSKGGKVKARLKLDGENQNFDEYQPKYDDFDEYDDFM.

The segment covering 1-27 (MEEDWEQHGEKEEVPLPAKKPDANKWD) has biased composition (basic and acidic residues). Residues 1-99 (MEEDWEQHGE…ENMTPEQKLA (99 aa)) form a disordered region. The span at 28–45 (GEDEEEEVKDSWEDEDEL) shows a compositional bias: acidic residues. Positions 31–119 (EEEEVKDSWE…ESDLKNALDT (89 aa)) form a coiled coil. 2 stretches are compositionally biased toward basic and acidic residues: residues 46 to 58 (EEKK…ETPK) and 69 to 90 (IVEK…KEAE).

It belongs to the eIF-3 subunit J family. In terms of assembly, component of the eukaryotic translation initiation factor 3 (eIF-3) complex.

Its subcellular location is the cytoplasm. In terms of biological role, component of the eukaryotic translation initiation factor 3 (eIF-3) complex, which is involved in protein synthesis of a specialized repertoire of mRNAs and, together with other initiation factors, stimulates binding of mRNA and methionyl-tRNAi to the 40S ribosome. The eIF-3 complex specifically targets and initiates translation of a subset of mRNAs involved in cell proliferation. This chain is Eukaryotic translation initiation factor 3 subunit J, found in Culex quinquefasciatus (Southern house mosquito).